The following is a 403-amino-acid chain: Adenylate cyclase (403 aa).

The segment covering 1-16 (MSTEHTNTPRADSPQS) has biased composition (polar residues). A disordered region spans residues 1-37 (MSTEHTNTPRADSPQSAAEAVRGARQHAPAATPAESD). A pyruvate binding region spans residues 31–60 (ATPAESDPILELAEAMEGPLRIPAHTPEAV). The Guanylate cyclase domain maps to 238–347 (AVGFADLVSY…PTVNMAARLT (110 aa)). Asp243 and Asp287 together coordinate Mg(2+).

Belongs to the adenylyl cyclase class-3 family. Homodimer. The cofactor is Mg(2+).

The protein localises to the cytoplasm. The catalysed reaction is ATP = 3',5'-cyclic AMP + diphosphate. Pyruvate-stimulated. Plays essential roles in regulation of cellular metabolism by catalyzing the synthesis of a second messenger, cAMP. This is Adenylate cyclase (cya) from Glutamicibacter nicotianae (Arthrobacter nicotianae).